A 312-amino-acid polypeptide reads, in one-letter code: Bark storage protein B (312 aa).

The N-terminal stretch at 1–24 is a signal peptide; that stretch reads MPQQSMQASLRDPIAEIERSNCKI. Residue Asn70 is glycosylated (N-linked (GlcNAc...) asparagine).

This sequence to wound-inducible poplar endochitinases. As to quaternary structure, monomer. Bark tissue.

In terms of biological role, may play a role in nitrogen storage. The chain is Bark storage protein B (BSP) from Populus deltoides (Eastern poplar).